The chain runs to 303 residues: N-acetyl-D-glucosamine kinase (303 aa).

ATP-binding positions include 4-11 (GFDMGGTK) and 133-140 (GVGGGLIV). Positions 157, 177, 179, and 184 each coordinate Zn(2+).

It belongs to the ROK (NagC/XylR) family. NagK subfamily.

The enzyme catalyses N-acetyl-D-glucosamine + ATP = N-acetyl-D-glucosamine 6-phosphate + ADP + H(+). Its pathway is cell wall biogenesis; peptidoglycan recycling. Catalyzes the phosphorylation of N-acetyl-D-glucosamine (GlcNAc) derived from cell-wall degradation, yielding GlcNAc-6-P. The polypeptide is N-acetyl-D-glucosamine kinase (Yersinia enterocolitica serotype O:8 / biotype 1B (strain NCTC 13174 / 8081)).